Reading from the N-terminus, the 350-residue chain is Biotin synthase (350 aa).

Positions 41 to 265 (NEVQISRLLS…VMPLSRVRLS (225 aa)) constitute a Radical SAM core domain. Residues Cys-56, Cys-60, and Cys-63 each coordinate [4Fe-4S] cluster. Residues Cys-100, Cys-131, Cys-191, and Arg-263 each coordinate [2Fe-2S] cluster.

This sequence belongs to the radical SAM superfamily. Biotin synthase family. As to quaternary structure, homodimer. Requires [4Fe-4S] cluster as cofactor. It depends on [2Fe-2S] cluster as a cofactor.

The catalysed reaction is (4R,5S)-dethiobiotin + (sulfur carrier)-SH + 2 reduced [2Fe-2S]-[ferredoxin] + 2 S-adenosyl-L-methionine = (sulfur carrier)-H + biotin + 2 5'-deoxyadenosine + 2 L-methionine + 2 oxidized [2Fe-2S]-[ferredoxin]. Its pathway is cofactor biosynthesis; biotin biosynthesis; biotin from 7,8-diaminononanoate: step 2/2. In terms of biological role, catalyzes the conversion of dethiobiotin (DTB) to biotin by the insertion of a sulfur atom into dethiobiotin via a radical-based mechanism. The polypeptide is Biotin synthase (Shewanella loihica (strain ATCC BAA-1088 / PV-4)).